A 168-amino-acid chain; its full sequence is Envelope glycoprotein L (168 aa).

Residues 1–22 form the signal peptide; it reads MMWKWVTLLLFVLVCGDNPVNA. The tract at residues 25-138 is interaction with gH; sequence HNPFVCCHQK…TDSSGFKNNL (114 aa).

It belongs to the herpesviridae glycoprotein L family. Interacts with glycoprotein H (gH); this interaction is necessary for the correct processing and cell surface expression of gH. The heterodimer gH/gL seems to interact with gB trimers during fusion.

It is found in the virion membrane. The protein localises to the host cell membrane. Its subcellular location is the host Golgi apparatus. The protein resides in the host trans-Golgi network. Its function is as follows. The heterodimer glycoprotein H-glycoprotein L is required for the fusion of viral and plasma membranes leading to virus entry into the host cell. Acts as a functional inhibitor of gH and maintains gH in an inhibited form. Upon binding to host integrins, gL dissociates from gH leading to activation of the viral fusion glycoproteins gB and gH. In Connochaetes taurinus (Blue wildebeest), this protein is Envelope glycoprotein L.